The primary structure comprises 194 residues: Large ribosomal subunit protein bL9 (194 aa).

Positions 169-194 (DDINDNARPENFFDPNAEFDGGEDNA) are disordered.

The protein belongs to the bacterial ribosomal protein bL9 family.

In terms of biological role, binds to the 23S rRNA. This chain is Large ribosomal subunit protein bL9, found in Mesorhizobium japonicum (strain LMG 29417 / CECT 9101 / MAFF 303099) (Mesorhizobium loti (strain MAFF 303099)).